The primary structure comprises 878 residues: Alanine--tRNA ligase (878 aa).

Zn(2+) contacts are provided by His567, His571, Cys669, and His673.

The protein belongs to the class-II aminoacyl-tRNA synthetase family. Requires Zn(2+) as cofactor.

The protein resides in the cytoplasm. It carries out the reaction tRNA(Ala) + L-alanine + ATP = L-alanyl-tRNA(Ala) + AMP + diphosphate. Its function is as follows. Catalyzes the attachment of alanine to tRNA(Ala) in a two-step reaction: alanine is first activated by ATP to form Ala-AMP and then transferred to the acceptor end of tRNA(Ala). Also edits incorrectly charged Ser-tRNA(Ala) and Gly-tRNA(Ala) via its editing domain. In Rickettsia felis (strain ATCC VR-1525 / URRWXCal2) (Rickettsia azadi), this protein is Alanine--tRNA ligase.